Reading from the N-terminus, the 64-residue chain is Potassium channel toxin alpha-KTx J123 (64 aa).

The N-terminal stretch at 1 to 21 is a signal peptide; the sequence is MNKVYLVAVLVLFLALTINES. Intrachain disulfides connect Cys-30-Cys-52, Cys-37-Cys-60, and Cys-41-Cys-62.

Belongs to the short scorpion toxin superfamily. Potassium channel inhibitor family. Alpha-KTx 11 subfamily. Expressed by the venom gland.

Its subcellular location is the secreted. Its function is as follows. This recombinant toxin inhibits mammalian voltage-gated potassium channels Kv1.3/KCNA3 (IC(50)=0.79 nM) and Kv1.2/KCNA2 (IC(50)=26.4 nM). This chain is Potassium channel toxin alpha-KTx J123, found in Olivierus martensii (Manchurian scorpion).